The chain runs to 212 residues: ATP phosphoribosyltransferase (212 aa).

It belongs to the ATP phosphoribosyltransferase family. Short subfamily. In terms of assembly, heteromultimer composed of HisG and HisZ subunits.

The protein localises to the cytoplasm. The enzyme catalyses 1-(5-phospho-beta-D-ribosyl)-ATP + diphosphate = 5-phospho-alpha-D-ribose 1-diphosphate + ATP. The protein operates within amino-acid biosynthesis; L-histidine biosynthesis; L-histidine from 5-phospho-alpha-D-ribose 1-diphosphate: step 1/9. Catalyzes the condensation of ATP and 5-phosphoribose 1-diphosphate to form N'-(5'-phosphoribosyl)-ATP (PR-ATP). Has a crucial role in the pathway because the rate of histidine biosynthesis seems to be controlled primarily by regulation of HisG enzymatic activity. The polypeptide is ATP phosphoribosyltransferase (Albidiferax ferrireducens (strain ATCC BAA-621 / DSM 15236 / T118) (Rhodoferax ferrireducens)).